Here is a 178-residue protein sequence, read N- to C-terminus: Large ribosomal subunit protein uL6 (178 aa).

The protein belongs to the universal ribosomal protein uL6 family. In terms of assembly, part of the 50S ribosomal subunit.

Functionally, this protein binds to the 23S rRNA, and is important in its secondary structure. It is located near the subunit interface in the base of the L7/L12 stalk, and near the tRNA binding site of the peptidyltransferase center. This Corynebacterium jeikeium (strain K411) protein is Large ribosomal subunit protein uL6.